A 161-amino-acid chain; its full sequence is Small heat shock protein hspJ (161 aa).

In terms of domain architecture, sHSP spans 52–161 (SKFTSLNPKL…FEKEIKINIE (110 aa)).

This sequence belongs to the small heat shock protein (HSP20) family.

In Dictyostelium discoideum (Social amoeba), this protein is Small heat shock protein hspJ (hspJ).